The chain runs to 461 residues: D-phenylhydantoinase (461 aa).

3 residues coordinate a divalent metal cation: H59, H61, and K151. An N6-carboxylysine modification is found at K151. Y156 is a substrate binding site. A divalent metal cation is bound by residues H182 and H239. S286 provides a ligand contact to substrate. D313 lines the a divalent metal cation pocket. N335 serves as a coordination point for substrate.

Belongs to the metallo-dependent hydrolases superfamily. Hydantoinase/dihydropyrimidinase family. In terms of assembly, homotetramer. A divalent metal cation is required as a cofactor. Carboxylation allows a single lysine to coordinate two divalent metal cations.

The enzyme catalyses D-5-phenylhydantoin + H2O = N-carbamoyl-D-phenylglycine + H(+). Its function is as follows. Catalyzes the stereospecific hydrolysis of the cyclic amide bond of D-hydantoin derivatives with an aromatic side chains at the 5'-position. Has no activity on dihydropyrimidines. The physiological function is unknown. The protein is D-phenylhydantoinase of Escherichia coli O6:K15:H31 (strain 536 / UPEC).